We begin with the raw amino-acid sequence, 1103 residues long: Ubiquitin carboxyl-terminal hydrolase 7 (1103 aa).

Low complexity predominate over residues 1 to 11 (MNHQQQQQQQQ). 2 disordered regions span residues 1–41 (MNHQ…TQNP) and 46–65 (NVTLSDGHSNAEEDMEDDTS). The tract at residues 1 to 209 (MNHQQQQQQQ…APHGVAWDSK (209 aa)) is interaction with TSPYL5. Phosphoserine is present on Ser19. A compositionally biased stretch (acidic residues) spans 20-32 (EPEDMEMEAGDTD). Phosphoserine is present on residues Ser50 and Ser54. Residues 54 to 209 (SNAEEDMEDD…APHGVAWDSK (156 aa)) are interaction with p53/TP53 and MDM2. Residues 69 to 196 (EATFQFTVER…DDKVTFEVFV (128 aa)) enclose the MATH domain. Residues 71–206 (TFQFTVERFS…QADAPHGVAW (136 aa)) form a necessary for nuclear localization region. Residues 215–522 (VGLKNQGATC…NAYMLVYIRE (308 aa)) enclose the USP domain. The active-site Nucleophile is the Cys224. The active-site Proton acceptor is the His465. At Lys870 the chain carries N6-acetyllysine; alternate. Residue Lys870 forms a Glycyl lysine isopeptide (Lys-Gly) (interchain with G-Cter in SUMO2); alternate linkage. Lys870 is covalently cross-linked (Glycyl lysine isopeptide (Lys-Gly) (interchain with G-Cter in ubiquitin); alternate). Lys883 participates in a covalent cross-link: Glycyl lysine isopeptide (Lys-Gly) (interchain with G-Cter in SUMO2). The residue at position 964 (Ser964) is a Phosphoserine. Lys1085 and Lys1097 each carry N6-acetyllysine.

It belongs to the peptidase C19 family. Monomer. Homodimer. Part of a complex with DAXX, MDM2, RASSF1 and USP7. Part of a complex with DAXX, MDM2 and USP7. Interacts with MDM2; the interaction is independent of p53/TP53. Interacts with DAXX; the interaction is direct and independent of MDM2 and p53/TP53. Component of a complex composed of KMT2E, OGT and USP7; the complex stabilizes KMT2E, preventing KMT2E ubiquitination and proteasomal-mediated degradation. Interacts (via MATH domain) with KMT2E. Interacts with OGT. Interacts with FOXO4; the interaction is enhanced in presence of hydrogen peroxide and occurs independently of p53/TP53. Interacts with p53/TP53; the interaction is enhanced in response to DNA damage; the interaction is impaired by TSPYL5. Interacts with PTEN; the interaction is direct. Interacts with ATXN1 and the strength of interaction is influenced by the length of the poly-Gln region in ATXN1. A weaker interaction seen with mutants having longer poly-Gln regions. Interacts with KIAA1530/UVSSA. Interacts with MEX3C and antagonizes its ability to degrade mRNA. Interacts with DNMT1 and UHRF1. Interacts with FOXP3. Interacts (via MATH domain) with RNF220. Associated component of the Polycomb group (PcG) multiprotein PRC1-like complex. Interacts with EPOP. Interacts with OTUD4 and USP9X; the interaction is direct. Interacts with CRY2. Interacts with REST. Interacts with ERCC6. Part of a complex consisting of USP7, MAGEL2 and TRIM27; directly interacts with MAGEL2; directly interacts with TRIM27. Polyneddylated. Post-translationally, not sumoylated. In terms of processing, polyubiquitinated. Ubiquitinated at Lys-870. As to expression, widely expressed. High expression is detected in brain, bone marrow, thymus and testis.

Its subcellular location is the nucleus. It localises to the cytoplasm. It is found in the PML body. The protein localises to the chromosome. It catalyses the reaction Thiol-dependent hydrolysis of ester, thioester, amide, peptide and isopeptide bonds formed by the C-terminal Gly of ubiquitin (a 76-residue protein attached to proteins as an intracellular targeting signal).. Functionally, hydrolase that deubiquitinates target proteins such as ARMC5, FOXO4, DEPTOR, KAT5, p53/TP53, MDM2, ERCC6, DNMT1, UHRF1, PTEN, KMT2E/MLL5 and DAXX. Together with DAXX, prevents MDM2 self-ubiquitination and enhances the E3 ligase activity of MDM2 towards p53/TP53, thereby promoting p53/TP53 ubiquitination and proteasomal degradation. Deubiquitinates p53/TP53, preventing degradation of p53/TP53, and enhances p53/TP53-dependent transcription regulation, cell growth repression and apoptosis. Deubiquitinates p53/TP53 and MDM2 and strongly stabilizes p53/TP53 even in the presence of excess MDM2, and also induces p53/TP53-dependent cell growth repression and apoptosis. Deubiquitination of FOXO4 in presence of hydrogen peroxide is not dependent on p53/TP53 and inhibits FOXO4-induced transcriptional activity. In association with DAXX, is involved in the deubiquitination and translocation of PTEN from the nucleus to the cytoplasm, both processes that are counteracted by PML. Deubiquitinates KMT2E preventing KMT2E proteasomal-mediated degradation. Involved in cell proliferation during early embryonic development. Involved in transcription-coupled nucleotide excision repair (TC-NER) in response to UV damage: recruited to DNA damage sites following interaction with KIAA1530/UVSSA and promotes deubiquitination of ERCC6, preventing UV-induced degradation of ERCC6. Involved in maintenance of DNA methylation via its interaction with UHRF1 and DNMT1: acts by mediating deubiquitination of UHRF1 and DNMT1, preventing their degradation and promoting DNA methylation by DNMT1. Deubiquitinates alkylation repair enzyme ALKBH3. OTUD4 recruits USP7 and USP9X to stabilize ALKBH3, thereby promoting the repair of alkylated DNA lesions. Acts as a chromatin regulator via its association with the Polycomb group (PcG) multiprotein PRC1-like complex; may act by deubiquitinating components of the PRC1-like complex. Able to mediate deubiquitination of histone H2B; it is however unsure whether this activity takes place in vivo. Exhibits a preference towards 'Lys-48'-linked ubiquitin chains. Increases regulatory T-cells (Treg) suppressive capacity by deubiquitinating and stabilizing the transcription factor FOXP3 which is crucial for Treg cell function. Plays a role in the maintenance of the circadian clock periodicity via deubiquitination and stabilization of the CRY1 and CRY2 proteins. Deubiquitinates REST, thereby stabilizing REST and promoting the maintenance of neural progenitor cells. Deubiquitinates SIRT7, inhibiting SIRT7 histone deacetylase activity and regulating gluconeogenesis. Involved in the regulation of WASH-dependent actin polymerization at the surface of endosomes and the regulation of endosomal protein recycling. It maintains optimal WASH complex activity and precise F-actin levels via deubiquitination of TRIM27 and WASHC1. Mediates the deubiquitination of phosphorylated DEPTOR, promoting its stability and leading to decreased mTORC1 signaling. This is Ubiquitin carboxyl-terminal hydrolase 7 (Usp7) from Mus musculus (Mouse).